We begin with the raw amino-acid sequence, 174 residues long: Thiol-disulfide oxidoreductase ResA (174 aa).

The chain crosses the membrane as a helical; Signal-anchor for type II membrane protein span at residues 11–30 (TVILLLLLAALGYTIYANFF). The region spanning 36-174 (VAVGSTAPDF…IKQHLESIKP (139 aa)) is the Thioredoxin domain. An intrachain disulfide couples Cys-74 to Cys-77.

Belongs to the thioredoxin family. ResA subfamily.

It is found in the cell membrane. It functions in the pathway protein modification; cytochrome c assembly. Its function is as follows. Thiol-disulfide oxidoreductase which is required in disulfide reduction during c-type cytochrome synthesis. May accept reducing equivalents from CcdA, leading to breakage of disulfide bonds in apocytochrome c; following this reduction heme can be covalently attached. This chain is Thiol-disulfide oxidoreductase ResA, found in Geobacillus thermodenitrificans (strain NG80-2).